We begin with the raw amino-acid sequence, 821 residues long: uncharacterized protein (821 aa).

10 disordered regions span residues 1–20, 55–96, 134–205, 240–263, 274–293, 360–381, 430–450, 467–497, 512–535, and 549–641; these read MGQT…TTSS, SENY…EAYS, SYDF…NNEH, RLHQ…RSSW, PEEF…TPLN, NVLQ…ESNS, TSED…NESR, EFST…SQAF, RNLF…NQPT, and AQEP…SNQT. 2 stretches are compositionally biased toward polar residues: residues 58-88 and 185-203; these read YADT…CSTQ and SLPS…SINN. The segment covering 279–293 has biased composition (polar residues); that stretch reads NASNPEAHSNFTPLN. Positions 437-450 are enriched in polar residues; sequence TMTQENQSLHNESR. Composition is skewed to low complexity over residues 517–529 and 568–578; these read TSNS…SSFS and SSLLDSSNSNS. Residues 579-622 show a composition bias toward polar residues; the sequence is QRPFSTVPSESNVFSRNASGNFSMSQTHQPTTDNTSSFSTQPGR. Residues 766 to 809 form an RING-type; atypical zinc finger; it reads CLICLETYTNGDICRKLQACKHFFHQACIDQWLTTGNNSCPLCR.

This is an uncharacterized protein from Schizosaccharomyces pombe (strain 972 / ATCC 24843) (Fission yeast).